The chain runs to 409 residues: uncharacterized protein (409 aa).

A signal peptide spans 1–39 (MVSDSKLELPLPVNQQKPRRRRILKVHLLIAALILSAVG). The Zn(2+) site is built by histidine 67, aspartate 69, glutamate 181, histidine 250, and histidine 271.

Belongs to the metallo-dependent hydrolases superfamily. Peptidase M19 family. Interacts with dil1. It depends on Zn(2+) as a cofactor.

The enzyme catalyses an L-aminoacyl-L-amino acid + H2O = 2 an L-alpha-amino acid. This is an uncharacterized protein from Schizosaccharomyces pombe (strain 972 / ATCC 24843) (Fission yeast).